A 34-amino-acid polypeptide reads, in one-letter code: VSCTGSKDCYAPCRKQTGCPNAKCINKSCKCYGC.

Disulfide bonds link Cys3-Cys24, Cys9-Cys29, Cys13-Cys19, and Cys31-Cys34. Cys34 is subject to Cysteine amide.

Belongs to the short scorpion toxin superfamily. Potassium channel inhibitor family. Alpha-KTx 06 subfamily. As to expression, expressed by the venom gland.

The protein localises to the secreted. Functionally, blocks voltage-gated potassium channels Kv1.2/KCNA2 (IC(50)=0.12-0.8 nM), KCa3.1/KCNN4 (IC(50)=1-2.2 nM), Shaker B (IC(50)=2.39-80 nM), Kv1.1/KCNA1 (IC(50)=37-45 or no activity, depending on the study), Kv1.3/KCNA3 (IC(50)=150-180 or no activity, depending on the study). This is Potassium channel toxin alpha-KTx 6.2 from Scorpio palmatus (Israeli golden scorpion).